Here is a 255-residue protein sequence, read N- to C-terminus: 5'-nucleotidase SurE (255 aa).

4 residues coordinate a divalent metal cation: Asp-11, Asp-12, Ser-43, and Asn-99.

The protein belongs to the SurE nucleotidase family. The cofactor is a divalent metal cation.

It localises to the cytoplasm. The catalysed reaction is a ribonucleoside 5'-phosphate + H2O = a ribonucleoside + phosphate. In terms of biological role, nucleotidase that shows phosphatase activity on nucleoside 5'-monophosphates. The polypeptide is 5'-nucleotidase SurE (Caldanaerobacter subterraneus subsp. tengcongensis (strain DSM 15242 / JCM 11007 / NBRC 100824 / MB4) (Thermoanaerobacter tengcongensis)).